Here is a 1127-residue protein sequence, read N- to C-terminus: Collagen alpha-2(I) chain (1127 aa).

Over residues 1–16 the composition is skewed to pro residues; it reads DGKPGLPGPAGPPGPP. Residues 1–1017 are disordered; the sequence is DGKPGLPGPA…GPAGPAGGGY (1017 aa). 3 stretches are compositionally biased toward low complexity: residues 171–191, 221–230, and 237–258; these read AGPAGPAGARGPAGPLGAAGP, EPGPNGAVGP, and PGNNGLNGAKGAAGTPGVAGAP. Pro residues predominate over residues 260–270; the sequence is FPGPRGGPGPQ. The span at 272 to 282 shows a compositional bias: low complexity; that stretch reads PQGAAGQRGLA. Positions 289-298 are enriched in gly residues; sequence GVKGDGGPKG. Low complexity-rich tracts occupy residues 326–345, 355–398, 436–449, and 461–473; these read ATGPAGNRGARGAPGSRGMP, AAGP…AGPA, APGPDGNNGATGAT, and QGAAGAPGFQGLP. The segment covering 474 to 483 has biased composition (gly residues); the sequence is GPAGGAGEAG. A compositionally biased stretch (low complexity) spans 508-518; that stretch reads NPGAAGASGPQ. A compositionally biased stretch (gly residues) spans 531–568; it reads GTDGGKGEPGAAGAAGGPGHQGPGGMPGERGAAGGPGG. Residues 569-580 show a composition bias toward basic and acidic residues; it reads KGEKGEAGHRGP. Low complexity-rich tracts occupy residues 611–625 and 634–647; these read SGSFGPAGPAGARGA and PAGAPGFAGPPGAD. Residues 657–666 are compositionally biased toward gly residues; it reads GPSGGKGESG. Composition is skewed to low complexity over residues 667–692, 703–730, and 758–778; these read PSGPAGPAGQSGPPGASGPAGPTGAR, FPGAAGRVGAAGPAGLVGPPGSAGPAGK, and SGEKGPSGEPGTPGTSGPLGL. Positions 792–801 are enriched in gly residues; sequence GSPGGAGAVG. 2 stretches are compositionally biased toward low complexity: residues 802 to 824 and 860 to 872; these read EAGRVGPAGPAGARGAPGNLGLP and PGSSGAMGLAGAP. Residues 876-897 are compositionally biased toward gly residues; that stretch reads GPSGGAGRPGNRGESGPGGAAG. The segment covering 898–913 has biased composition (low complexity); the sequence is AVGPAGARGAAGPSGP. Residues 914-928 show a composition bias toward basic and acidic residues; that stretch reads RGEKGVAGEKGERGM. Composition is skewed to low complexity over residues 937–956 and 986–997; these read LQGMPGPSGPSGDTGSAGPN and PGARGPPGYVGP. Positions 998–1010 are enriched in pro residues; sequence AGPPGXPGLPGPA. In terms of domain architecture, Fibrillar collagen NC1 spans 1093–1127; that stretch reads RTNKPSRLPLLDLAPLDLGGADQEFGLDLGPVCFK.

This sequence belongs to the fibrillar collagen family.

The protein localises to the secreted. The protein resides in the extracellular space. It localises to the extracellular matrix. This is Collagen alpha-2(I) chain from Epinephelus marginatus (Dusky grouper).